We begin with the raw amino-acid sequence, 486 residues long: CDT1-like protein b (486 aa).

2 disordered regions span residues 273 to 294 and 348 to 371; these read PEGG…PSRS and VKDD…ASDD. Residues 281 to 294 are compositionally biased toward polar residues; that stretch reads LRSTNSLARGPSRS. Residues 348 to 363 show a composition bias toward basic and acidic residues; sequence VKDDISNESGDEKSNY.

It belongs to the Cdt1 family. Expressed in proliferating (e.g. shoot and root apical meristems, organ primordia, guard cells and stomatal lineage) and endoreplicating cells (e.g. developing trichomes).

It is found in the nucleus. Functionally, member of the pre-replication complex. Regulates endoreduplication. Involved in the coordination of cell and plastid division. This Arabidopsis thaliana (Mouse-ear cress) protein is CDT1-like protein b (CDT1B).